The chain runs to 115 residues: Photosystem II reaction center Psb28 protein (115 aa).

The protein belongs to the Psb28 family. In terms of assembly, part of the photosystem II complex.

Its subcellular location is the plastid. It localises to the chloroplast thylakoid membrane. This chain is Photosystem II reaction center Psb28 protein, found in Trieres chinensis (Marine centric diatom).